We begin with the raw amino-acid sequence, 146 residues long: 3-dehydroquinate dehydratase (146 aa).

Tyrosine 23 functions as the Proton acceptor in the catalytic mechanism. Substrate contacts are provided by asparagine 74, histidine 80, and aspartate 87. Catalysis depends on histidine 100, which acts as the Proton donor. Residues 101-102 (IS) and arginine 111 each bind substrate.

It belongs to the type-II 3-dehydroquinase family. As to quaternary structure, homododecamer.

It carries out the reaction 3-dehydroquinate = 3-dehydroshikimate + H2O. It participates in metabolic intermediate biosynthesis; chorismate biosynthesis; chorismate from D-erythrose 4-phosphate and phosphoenolpyruvate: step 3/7. Its function is as follows. Catalyzes a trans-dehydration via an enolate intermediate. The polypeptide is 3-dehydroquinate dehydratase (Bacillus cereus (strain G9842)).